A 465-amino-acid chain; its full sequence is 3-isopropylmalate dehydratase large subunit (465 aa).

Positions 347, 407, and 410 each coordinate [4Fe-4S] cluster. The disordered stretch occupies residues 417 to 443; the sequence is TLKPGERSASTSNRNFEGRQGKGGRTH.

This sequence belongs to the aconitase/IPM isomerase family. LeuC type 1 subfamily. Heterodimer of LeuC and LeuD. Requires [4Fe-4S] cluster as cofactor.

It catalyses the reaction (2R,3S)-3-isopropylmalate = (2S)-2-isopropylmalate. It participates in amino-acid biosynthesis; L-leucine biosynthesis; L-leucine from 3-methyl-2-oxobutanoate: step 2/4. Functionally, catalyzes the isomerization between 2-isopropylmalate and 3-isopropylmalate, via the formation of 2-isopropylmaleate. This chain is 3-isopropylmalate dehydratase large subunit, found in Thermobifida fusca (strain YX).